A 379-amino-acid chain; its full sequence is Anthranilate O-methyltransferase 3 (379 aa).

Positions 1–10 (MPMRIERDLH) are enriched in basic and acidic residues. A disordered region spans residues 1-21 (MPMRIERDLHMATGNGETSYT). Position 20 (Tyr20) interacts with S-adenosyl-L-homocysteine. Residue Gln27 coordinates anthranilate. Positions 61, 66, 100, 101, 143, and 144 each coordinate S-adenosyl-L-homocysteine. Residues His164 and Trp165 each contribute to the anthranilate site. Positions 265 and 267 each coordinate Mg(2+).

It belongs to the methyltransferase superfamily. Type-7 methyltransferase family. SABATH subfamily.

The catalysed reaction is anthranilate + S-adenosyl-L-methionine = O-methyl anthranilate + S-adenosyl-L-homocysteine. The enzyme catalyses benzoate + S-adenosyl-L-methionine = methyl benzoate + S-adenosyl-L-homocysteine. It carries out the reaction salicylate + S-adenosyl-L-methionine = methyl salicylate + S-adenosyl-L-homocysteine. In terms of biological role, methyltransferase involved in the biosynthesis of methyl anthranilate in response to stresses. Utilizes anthranilic acid as substrate. Produces exclusively the O-methyl ester. Can also use benzoic acid as substrate. Low activity with salicylic acid. The protein is Anthranilate O-methyltransferase 3 (AAMT3) of Zea mays (Maize).